The following is a 96-amino-acid chain: Co-chaperonin GroES 2 (96 aa).

It belongs to the GroES chaperonin family. In terms of assembly, heptamer of 7 subunits arranged in a ring. Interacts with the chaperonin GroEL.

Its subcellular location is the cytoplasm. Together with the chaperonin GroEL, plays an essential role in assisting protein folding. The GroEL-GroES system forms a nano-cage that allows encapsulation of the non-native substrate proteins and provides a physical environment optimized to promote and accelerate protein folding. GroES binds to the apical surface of the GroEL ring, thereby capping the opening of the GroEL channel. The chain is Co-chaperonin GroES 2 from Vibrio cholerae serotype O1 (strain ATCC 39315 / El Tor Inaba N16961).